The following is a 374-amino-acid chain: Methionine import ATP-binding protein MetN 2 (374 aa).

The 240-residue stretch at 32–271 (VRFVGLGKTY…PQHEVSQTLL (240 aa)) folds into the ABC transporter domain. 68–75 (GRSGAGKS) provides a ligand contact to ATP.

It belongs to the ABC transporter superfamily. Methionine importer (TC 3.A.1.24) family. In terms of assembly, the complex is composed of two ATP-binding proteins (MetN), two transmembrane proteins (MetI) and a solute-binding protein (MetQ).

The protein resides in the cell inner membrane. It catalyses the reaction L-methionine(out) + ATP + H2O = L-methionine(in) + ADP + phosphate + H(+). The enzyme catalyses D-methionine(out) + ATP + H2O = D-methionine(in) + ADP + phosphate + H(+). Part of the ABC transporter complex MetNIQ involved in methionine import. Responsible for energy coupling to the transport system. In Pseudomonas fluorescens (strain Pf0-1), this protein is Methionine import ATP-binding protein MetN 2.